The sequence spans 201 residues: MYEYIRGQFQGISKDYVVIELNNIGYRIFTSGNTMSNMPKVGDEVLLYLEQIVREDFIGLYGFTTKEELEMFKLLLSINGVGAKAALSLLSISTVNNLKYAIMMGDEKHITRAPGIGKKTAQRIILELKDKLKPDELTSEEEQLIEGINDNSDYSFNINETLSALMALGYTEKEAQKALEKVDKTLSIENMIKESLKLLMR.

Residues 1–64 (MYEYIRGQFQ…EDFIGLYGFT (64 aa)) are domain I. A domain II region spans residues 65–143 (TKEELEMFKL…PDELTSEEEQ (79 aa)). The flexible linker stretch occupies residues 144 to 152 (LIEGINDNS). The tract at residues 153–201 (DYSFNINETLSALMALGYTEKEAQKALEKVDKTLSIENMIKESLKLLMR) is domain III.

Belongs to the RuvA family. Homotetramer. Forms an RuvA(8)-RuvB(12)-Holliday junction (HJ) complex. HJ DNA is sandwiched between 2 RuvA tetramers; dsDNA enters through RuvA and exits via RuvB. An RuvB hexamer assembles on each DNA strand where it exits the tetramer. Each RuvB hexamer is contacted by two RuvA subunits (via domain III) on 2 adjacent RuvB subunits; this complex drives branch migration. In the full resolvosome a probable DNA-RuvA(4)-RuvB(12)-RuvC(2) complex forms which resolves the HJ.

Its subcellular location is the cytoplasm. In terms of biological role, the RuvA-RuvB-RuvC complex processes Holliday junction (HJ) DNA during genetic recombination and DNA repair, while the RuvA-RuvB complex plays an important role in the rescue of blocked DNA replication forks via replication fork reversal (RFR). RuvA specifically binds to HJ cruciform DNA, conferring on it an open structure. The RuvB hexamer acts as an ATP-dependent pump, pulling dsDNA into and through the RuvAB complex. HJ branch migration allows RuvC to scan DNA until it finds its consensus sequence, where it cleaves and resolves the cruciform DNA. The polypeptide is Holliday junction branch migration complex subunit RuvA (Clostridium perfringens (strain SM101 / Type A)).